Reading from the N-terminus, the 214-residue chain is Single-pass membrane and coiled-coil domain-containing protein 1 (214 aa).

Positions 5–40 form a coiled coil; the sequence is TTTLISLKEAMKRVDNKLRALDTQFKELDVTKDNLT. Residues 59 to 81 traverse the membrane as a helical segment; sequence IWTAALALGFTSMELNIVYSYVI. Positions 193-214 are disordered; it reads KQAQDPENSRAPLKELMPPVKD.

It localises to the membrane. The chain is Single-pass membrane and coiled-coil domain-containing protein 1 (Smco1) from Mus musculus (Mouse).